The following is a 429-amino-acid chain: Fumarylacetoacetase (429 aa).

Residue Asp139 coordinates Ca(2+). The active-site Proton acceptor is His146. Residue Arg155 participates in substrate binding. The Ca(2+) site is built by Glu212, Glu214, and Asp246. Asp246 is a binding site for Mg(2+). Gln253 contacts substrate. Residues Lys266 and Thr270 each contribute to the Mg(2+) site. Position 363 (Thr363) interacts with substrate.

This sequence belongs to the FAH family. The cofactor is Ca(2+). Requires Mg(2+) as cofactor.

It carries out the reaction 4-fumarylacetoacetate + H2O = acetoacetate + fumarate + H(+). It functions in the pathway amino-acid degradation; L-phenylalanine degradation; acetoacetate and fumarate from L-phenylalanine: step 6/6. Its function is as follows. Converts fumarylacetoacetate to acetoacetate and fumarate. Involved in tyrosine catabolic pathway. Catalyzes the final step in the tyrosine degradation pathway. The polypeptide is Fumarylacetoacetase (Oryza sativa subsp. japonica (Rice)).